The sequence spans 171 residues: Co-chaperone protein HscB (171 aa).

Positions 2–74 constitute a J domain; that stretch reads DYFTLFGLPA…LTRAEYLLSL (73 aa).

The protein belongs to the HscB family. In terms of assembly, interacts with HscA and stimulates its ATPase activity. Interacts with IscU.

Its function is as follows. Co-chaperone involved in the maturation of iron-sulfur cluster-containing proteins. Seems to help targeting proteins to be folded toward HscA. The chain is Co-chaperone protein HscB from Salmonella agona (strain SL483).